A 473-amino-acid polypeptide reads, in one-letter code: uncharacterized protein (473 aa).

In terms of domain architecture, SET spans 26–254 (PKLYIASSGV…KMSEIFNSFG (229 aa)).

This is an uncharacterized protein from Schizosaccharomyces pombe (strain 972 / ATCC 24843) (Fission yeast).